A 1710-amino-acid chain; its full sequence is Latrophilin Cirl (1710 aa).

Topologically, residues 1-767 (MLPTILSISY…LFTMFDGNMR (767 aa)) are extracellular. An SUEL-type lectin domain is found at 25–114 (ACEGKKLTIE…KYLEAHYQCI (90 aa)). N-linked (GlcNAc...) asparagine glycosylation is present at Asn-142. The segment at 183 to 304 (QHTAVTHSTP…SGSVVPGNGS (122 aa)) is disordered. 2 stretches are compositionally biased toward polar residues: residues 185 to 198 (TAVTHSTPSSSTTA) and 256 to 265 (NATSPSNTRI). Asn-256 carries an N-linked (GlcNAc...) asparagine glycan. Composition is skewed to low complexity over residues 275–285 (DDGTLLTTKSS) and 295–304 (SGSVVPGNGS). Asn-302 and Asn-341 each carry an N-linked (GlcNAc...) asparagine glycan. The disordered stretch occupies residues 376-400 (YDEYDDDPSSTTPATSSADCLHNSS). The span at 384-394 (SSTTPATSSAD) shows a compositional bias: low complexity. N-linked (GlcNAc...) asparagine glycosylation is found at Asn-398, Asn-655, Asn-703, and Asn-730. The GAIN-B domain occupies 561–754 (RSVVQKVKNI…AILMDVVDEH (194 aa)). 2 disulfide bridges follow: Cys-709–Cys-736 and Cys-724–Cys-738. The interval 709-754 (CVFWNYIDHAWSANGCSLESTNRTHSVCSCNHLTNFAILMDVVDEH) is GPS. A helical transmembrane segment spans residues 768–788 (IFIYISIGICVVFIVIALLTL). Residues 789 to 801 (KLFNGVFVKSART) lie on the Cytoplasmic side of the membrane. Residues 802 to 822 (SIYTSIYLCLLAIELLFLLGI) form a helical membrane-spanning segment. At 823-828 (EQTETS) the chain is on the extracellular side. The chain crosses the membrane as a helical span at residues 829-849 (IFCGFITIFLHCAILSGTAWF). Topologically, residues 850–875 (CYEAFHSYSTLTSDELLLEVDQTPKV) are cytoplasmic. A helical transmembrane segment spans residues 876–896 (NCYYLLSYGLSLSVVAISLVI). Topologically, residues 897–920 (DPSTYTQNDYCVLMEANALFYATF) are extracellular. A helical membrane pass occupies residues 921 to 941 (VMPVLVFFVAAIGYTFLSWII). The Cytoplasmic portion of the chain corresponds to 942–968 (MCRKSRTGLKTKEHTRLASVRFDIRCS). A helical transmembrane segment spans residues 969–989 (FVFLLLLSAVWCSAYFYLRGA). Topologically, residues 990-999 (KMDDDTADVY) are extracellular. Residues 1000–1020 (GYCFICFNTLLGLYIFVFHCI) traverse the membrane as a helical segment. Topologically, residues 1021 to 1710 (QNEKIRREYR…VRCYLEPLAK (690 aa)) are cytoplasmic. Phosphoserine occurs at positions 1156, 1253, 1260, 1329, and 1330. A disordered region spans residues 1234–1259 (KPNSGQHGKKKRGAGGVPASPSGSLH). Disordered stretches follow at residues 1452–1540 (GGGS…SDER) and 1568–1690 (DYGA…QQRH). The span at 1458–1483 (GGSVSSRSQQQQLKKQQQQQSLAQQR) shows a compositional bias: low complexity. Composition is skewed to acidic residues over residues 1491-1505 (DDDDDEDEEEDEEAT) and 1515-1528 (CDEDEEEDESDLED). The segment covering 1638 to 1650 (QTPAQKRQQLQKL) has biased composition (polar residues). Residues 1651–1672 (SPQSTTSSSSHTSHSNPNPHPH) are compositionally biased toward low complexity. Positions 1673–1689 (QLTHPHPHQHPPHHQQR) are enriched in basic residues.

Belongs to the G-protein coupled receptor 2 family. LN-TM7 subfamily. In terms of assembly, forms a heterodimer, consisting of a large extracellular region non-covalently linked to a seven-transmembrane moiety. Proteolytically cleaved into 2 subunits, an extracellular subunit and a seven-transmembrane subunit.

The protein resides in the cell membrane. The chain is Latrophilin Cirl from Drosophila erecta (Fruit fly).